Consider the following 1074-residue polypeptide: MSLKNEPRVNTSALQKIAADMSNIIENLDTRELHFEGEEVDYDVSPSDPKIQEVYIPFSAIYNTQGFKEPNIQTYLSGCPIKAQVLEVERFTSTTRVPSINLYTIELTHGEFKWQVKRKFKHFQEFHRELLKYKAFIRIPIPTRRHTFRRQNVREEPREMPSLPRSSENMIREEQFLGRRKQLEDYLTKILKMPMYRNYHATTEFLDISQLSFIHDLGPKGIEGMIMKRSGGHRIPGLNCCGQGRACYRWSKRWLIVKDSFLLYMKPDSGAIAFVLLVDKEFKIKVGKKETETKYGIRIDNLSRTLILKCNSYRHARWWGGAIEEFIQKHGTNFLKDHRFGSYAAIQENALAKWYVNAKGYFEDVANAMEEANEEIFITDWWLSPEIFLKRPVVEGNRWRLDCILKRKAQQGVRIFIMLYKEVELALGINSEYTKRTLMRLHPNIKVMRHPDHVSSTVYLWAHHEKLVIIDQSVAFVGGIDLAYGRWDDNEHRLTDVGSVKRVTSGPSLGSLPPAAMESMESLRLKDKNEPVQNLPIQKSIDDVDSKLKGIGKPRKFSKFSLYKQLHRHHLHDADSISSIDSTSSYFNHYRSHHNLIHGLKPHFKLFHPSSESEQGLTRPHADTGSIRSLQTGVGELHGETRFWHGKDYCNFVFKDWVQLDKPFADFIDRYSTPRMPWHDIASAVHGKAARDVARHFIQRWNFTKIMKSKYRSLSYPFLLPKSQTTAHELRYQVPGSVHANVQLLRSAADWSAGIKYHEESIHAAYVHVIENSRHYIYIENQFFISCADDKVVFNKIGDAIAQRILKAHRENQKYRVYVVIPLLPGFEGDISTGGGNALQAIMHFNYRTMCRGENSILGQLKAELGNQWINYISFCGLRTHAELEGNLVTELIYVHSKLLIADDNTVIIGSANINDRSMLGKRDSEMAVIVQDTETVPSVMDGKEYQAGRFARGLRLQCFRVVLGYLDDPSEDIQDPVSDKFFKEVWVSTAARNATIYDKVFRCLPNDEVHNLIQLRDFINKPVLAKEDPIRAEEELKKIRGFLVQFPFYFLSEESLLPSVGTKEAIVPMEVWT.

In terms of domain architecture, PX spans 81–212; it reads IKAQVLEVER…TEFLDISQLS (132 aa). The PH domain occupies 219-328; sequence PKGIEGMIMK…WGGAIEEFIQ (110 aa). 2 S-palmitoyl cysteine lipidation sites follow: Cys240 and Cys241. In terms of domain architecture, PLD phosphodiesterase 1 spans 459-486; sequence YLWAHHEKLVIIDQSVAFVGGIDLAYGR. A catalytic region spans residues 463 to 928; the sequence is HHEKLVIIDQ…MLGKRDSEMA (466 aa). Phosphoserine occurs at positions 499, 561, and 629. The region spanning 891–918 is the PLD phosphodiesterase 2 domain; that stretch reads ELIYVHSKLLIADDNTVIIGSANINDRS.

The protein belongs to the phospholipase D family. As to quaternary structure, interacts with PIP5K1B. Expressed abundantly in the pancreas and heart and at high levels in brain, placenta, spleen, uterus and small intestine.

It is found in the cytoplasm. The protein resides in the perinuclear region. The protein localises to the endoplasmic reticulum membrane. Its subcellular location is the golgi apparatus membrane. It localises to the late endosome membrane. It carries out the reaction a 1,2-diacyl-sn-glycero-3-phosphocholine + H2O = a 1,2-diacyl-sn-glycero-3-phosphate + choline + H(+). The catalysed reaction is ethanol + a 1,2-diacyl-sn-glycero-3-phosphocholine = 1,2-diacyl-sn-glycero-3-phosphoethanol + choline. It catalyses the reaction 1,2-dihexadecanoyl-sn-glycero-3-phosphocholine + H2O = 1,2-dihexadecanoyl-sn-glycero-3-phosphate + choline + H(+). Stimulated by phosphatidylinositol 4,5-bisphosphate and phosphatidylinositol 3,4,5-trisphosphate, activated by the phosphokinase C-alpha, by the ADP-ribosylation factor-1 (ARF-1), and to a lesser extent by GTP-binding proteins: RHO A, RAC-1 and CDC42. Inhibited by oleate. In terms of biological role, function as phospholipase selective for phosphatidylcholine. Implicated as a critical step in numerous cellular pathways, including signal transduction, membrane trafficking, and the regulation of mitosis. May be involved in the regulation of perinuclear intravesicular membrane traffic. This is Phospholipase D1 from Homo sapiens (Human).